Reading from the N-terminus, the 304-residue chain is MIRQRTLKSIVQTTGVGLHSGRKVTLILRPAAANTGVIYRRTDLNPPVDFPADANSVRDTMLCTALVNEDGVRISTVEHLNAALAGMGIDNVIIEVDAPEIPIMDGSASPFIYLLQSAGIDTLNAPKRFLRIKKPVRIEDGDKWAELVPFNGFRLDFTIDFNHPAIDADQQRLVLDFSSQSFIKDISRARTFGFMRDIEYLQSQNLALGGSFDNAIVLDDYRILNDDGLRFDNELVTHKVLDAIGDLYMCGHNIIGEMRAYKSGHALNNQLLRAVLADQEAYEWATFQAEEVPVTFAQPGMVLA.

Residues His-79, His-238, and Asp-242 each coordinate Zn(2+). His-265 (proton donor) is an active-site residue.

It belongs to the LpxC family. Zn(2+) serves as cofactor.

It catalyses the reaction a UDP-3-O-[(3R)-3-hydroxyacyl]-N-acetyl-alpha-D-glucosamine + H2O = a UDP-3-O-[(3R)-3-hydroxyacyl]-alpha-D-glucosamine + acetate. The protein operates within glycolipid biosynthesis; lipid IV(A) biosynthesis; lipid IV(A) from (3R)-3-hydroxytetradecanoyl-[acyl-carrier-protein] and UDP-N-acetyl-alpha-D-glucosamine: step 2/6. Functionally, catalyzes the hydrolysis of UDP-3-O-myristoyl-N-acetylglucosamine to form UDP-3-O-myristoylglucosamine and acetate, the committed step in lipid A biosynthesis. The chain is UDP-3-O-acyl-N-acetylglucosamine deacetylase from Photobacterium profundum (strain SS9).